A 1189-amino-acid chain; its full sequence is Increased DNA methylation 1 (1189 aa).

Disordered regions lie at residues 475–498 and 523–597; these read KNLH…HDSL and SRDE…CRLL. Basic and acidic residues predominate over residues 523–532; that stretch reads SRDERLRNEK. Basic residues-rich tracts occupy residues 541-550 and 565-590; these read KKGRKKARKH and NKGK…KRNN. A PHD-type 1 zinc finger spans residues 726–771; the sequence is DDSCGVCGDGGELICCDNCPSTFHQACLSMQVLPEGSWYCSSCTCW. The PHD-type 2; degenerate zinc finger occupies 767–823; sequence SCTCWICSELVSDNAERSQDFKCSQCAHKYHGTCLQGISKRRKLFPETYFCGKNCEK. One can recognise an N-acetyltransferase domain in the interval 879 to 1024; it reads MEESFLSMVD…GTTLLKKTLY (146 aa). A disordered region spans residues 1031–1157; sequence TMKGVCLSKE…SSSSAALEEV (127 aa). Basic and acidic residues-rich tracts occupy residues 1038 to 1050, 1102 to 1114, and 1129 to 1145; these read SKER…KEAD, NPSR…DRPN, and CLQK…KETT. Over residues 1147–1157 the composition is skewed to low complexity; the sequence is ASSSSAALEEV.

Interacts (via N-terminus) with IDM2. Interacts with IMD3. Part of a complex made of MBD7, IDM1, IDM2 and IDM3. In terms of tissue distribution, expressed in cotyledons and hypocotyls in young seedlings.

It is found in the nucleus. Its function is as follows. Histone H3 acetyltransferase that binds methylated DNA at chromatin sites lacking histone H3K4 di- or trimethylation and catalyzes H3K18 and H3K23 acetylation. Prevents the transcriptional silencing of transgenes and of some endogenous genes. Requires the presence of IDM2 for efficient H3K18 acetylation, but not for H3K23 acetylation. The protein is Increased DNA methylation 1 of Arabidopsis thaliana (Mouse-ear cress).